The primary structure comprises 332 residues: Protoheme IX farnesyltransferase (332 aa).

7 helical membrane-spanning segments follow: residues 63-83 (LICT…LNCL), 109-129 (TVFL…ISGV), 132-152 (LAAG…TIIL), 160-180 (IVFG…AATG), 188-208 (WLFS…AILL), 245-265 (ILGV…LLPF), and 286-306 (AKGL…LLLI).

Belongs to the UbiA prenyltransferase family. Protoheme IX farnesyltransferase subfamily.

It is found in the cell inner membrane. It catalyses the reaction heme b + (2E,6E)-farnesyl diphosphate + H2O = Fe(II)-heme o + diphosphate. It functions in the pathway porphyrin-containing compound metabolism; heme O biosynthesis; heme O from protoheme: step 1/1. Functionally, converts heme B (protoheme IX) to heme O by substitution of the vinyl group on carbon 2 of heme B porphyrin ring with a hydroxyethyl farnesyl side group. In Prochlorococcus marinus subsp. pastoris (strain CCMP1986 / NIES-2087 / MED4), this protein is Protoheme IX farnesyltransferase.